Here is a 538-residue protein sequence, read N- to C-terminus: Syncytin-2 (538 aa).

The signal sequence occupies residues 1–15 (MGLLLLLLILTPLLA). Over 16–478 (AYCHPDFRLL…GWLNWEGTWK (463 aa)) the chain is Extracellular. The short motif at 43–46 (CWLC) is the CXXC element. Cystine bridges form between C43-C46, C43-C439, and C431-C438. Residues N146, N177, N220, N241, N247, N312, and N332 are each glycosylated (N-linked (GlcNAc...) asparagine). Positions 354–374 (LIPLLVGLGIVGSAGTGIAGI) are fusion peptide. Residues 414 to 430 (LQNRRGLDMLTAAQGGI) carry the CKS-17 motif. The short motif at 431 to 439 (CLALDEKCC) is the CX6CC element. The N-linked (GlcNAc...) asparagine glycan is linked to N443. Residues 479-499 (WFSWVLPFTGPLVSLLLLLLF) form a helical membrane-spanning segment. The Cytoplasmic portion of the chain corresponds to 500–538 (GPCLLNLITQFVSSRLQATKLQMKLNKRVHPRNSQESPF).

The protein belongs to the gamma type-C retroviral envelope protein family. HERV class-I FRD env subfamily. In terms of assembly, the surface and transmembrane proteins form a heterodimer. They are attached by non-covalent interactions or by a labile interchain disulfide bond. In terms of processing, specific enzymatic cleavages in vivo yield the mature SU and TM proteins. The CXXC motif is highly conserved across a broad range of retroviral envelope proteins. It is thought to participate in the formation of a labile disulfide bond possibly with the CX6CC motif present in the transmembrane protein.

The protein localises to the virion. It localises to the cell membrane. In terms of biological role, this endogenous retroviral envelope protein has retained its original fusogenic properties and participates in trophoblast fusion and the formation of a syncytium during placenta morphogenesis. The interaction with MFSD2A is apparently important for this process. Endogenous envelope proteins may have kept, lost or modified their original function during evolution but this one can still make pseudotypes with MLV, HIV-1 or SIV-1 virions and confer infectivity. Retroviral envelope proteins mediate receptor recognition and membrane fusion during early infection. The surface protein mediates receptor recognition, while the transmembrane protein anchors the envelope heterodimer to the viral membrane through one transmembrane domain. The other hydrophobic domain, called fusion peptide, mediates fusion of the viral membrane with the target cell membrane. The polypeptide is Syncytin-2 (ERVFRD-1) (Callithrix jacchus (White-tufted-ear marmoset)).